The following is a 137-amino-acid chain: Nucleoside diphosphate kinase (137 aa).

The ATP site is built by Lys-9, Phe-57, Arg-85, Thr-91, Arg-102, and Asn-112. Residue His-115 is the Pros-phosphohistidine intermediate of the active site.

The protein belongs to the NDK family. In terms of assembly, homotetramer. Mg(2+) serves as cofactor.

The protein resides in the cytoplasm. It catalyses the reaction a 2'-deoxyribonucleoside 5'-diphosphate + ATP = a 2'-deoxyribonucleoside 5'-triphosphate + ADP. The catalysed reaction is a ribonucleoside 5'-diphosphate + ATP = a ribonucleoside 5'-triphosphate + ADP. Major role in the synthesis of nucleoside triphosphates other than ATP. The ATP gamma phosphate is transferred to the NDP beta phosphate via a ping-pong mechanism, using a phosphorylated active-site intermediate. This is Nucleoside diphosphate kinase from Nitratiruptor sp. (strain SB155-2).